The primary structure comprises 369 residues: Histidinol-phosphate aminotransferase 3 (369 aa).

Residue Lys-220 is modified to N6-(pyridoxal phosphate)lysine.

Belongs to the class-II pyridoxal-phosphate-dependent aminotransferase family. Histidinol-phosphate aminotransferase subfamily. As to quaternary structure, homodimer. Requires pyridoxal 5'-phosphate as cofactor.

It catalyses the reaction L-histidinol phosphate + 2-oxoglutarate = 3-(imidazol-4-yl)-2-oxopropyl phosphate + L-glutamate. The protein operates within amino-acid biosynthesis; L-histidine biosynthesis; L-histidine from 5-phospho-alpha-D-ribose 1-diphosphate: step 7/9. The chain is Histidinol-phosphate aminotransferase 3 (hisC3) from Mesorhizobium japonicum (strain LMG 29417 / CECT 9101 / MAFF 303099) (Mesorhizobium loti (strain MAFF 303099)).